Consider the following 178-residue polypeptide: Negative modulator of initiation of replication (178 aa).

The segment at 113–117 (RTRVY) is interaction with DNA.

It belongs to the SeqA family. Homodimer. Polymerizes to form helical filaments.

Its subcellular location is the cytoplasm. Negative regulator of replication initiation, which contributes to regulation of DNA replication and ensures that replication initiation occurs exactly once per chromosome per cell cycle. Binds to pairs of hemimethylated GATC sequences in the oriC region, thus preventing assembly of replication proteins and re-initiation at newly replicated origins. Repression is relieved when the region becomes fully methylated. The polypeptide is Negative modulator of initiation of replication (Photobacterium profundum (strain SS9)).